The chain runs to 158 residues: uncharacterized protein (158 aa).

This is an uncharacterized protein from Aedes vexans (Inland floodwater mosquito).